The primary structure comprises 379 residues: Endonuclease III homolog 1, chloroplastic (379 aa).

The N-terminal 54 residues, 1-54, are a transit peptide targeting the chloroplast; it reads MILLVNGGAATSIHPNAARFYRIGTMSRQIHGAVSSSKHISLKTQHPLSDSNSE. The region spanning 244–272 is the HhH domain; it reads KYDGDIPSSLDDLLSLPGIGPKMAHLILH. Lys-265 acts as the Nucleophile; for N-glycosylase activity in catalysis. Residues Cys-340, Cys-347, Cys-350, and Cys-356 each coordinate [4Fe-4S] cluster.

It belongs to the Nth/MutY family. Requires [4Fe-4S] cluster as cofactor. Expressed at low levels in roots, stems, leaves and flowers.

The protein resides in the plastid. Its subcellular location is the chloroplast stroma. The protein localises to the chloroplast nucleoid. The enzyme catalyses 2'-deoxyribonucleotide-(2'-deoxyribose 5'-phosphate)-2'-deoxyribonucleotide-DNA = a 3'-end 2'-deoxyribonucleotide-(2,3-dehydro-2,3-deoxyribose 5'-phosphate)-DNA + a 5'-end 5'-phospho-2'-deoxyribonucleoside-DNA + H(+). Bifunctional DNA N-glycosylase with associated apurinic/apyrimidinic (AP) lyase function that catalyzes the first step in base excision repair (BER), the primary repair pathway for the repair of oxidative DNA damage. The DNA N-glycosylase activity releases the damaged DNA base from DNA by cleaving the N-glycosidic bond, leaving an AP site. The AP lyase activity cleaves the phosphodiester bond 3' to the AP site by a beta-elimination. Primarily recognizes and repairs oxidative base damage of pyrimidines. The sequence is that of Endonuclease III homolog 1, chloroplastic from Arabidopsis thaliana (Mouse-ear cress).